Consider the following 249-residue polypeptide: Nodulation protein H (249 aa).

In terms of biological role, required for the formation of sulfated nod factor. Proposed to transfer activated sulfate (PAPS) to a N-acetylglucosamine of the nod factor. This Rhizobium tropici protein is Nodulation protein H (nodH).